Here is a 521-residue protein sequence, read N- to C-terminus: Vang-like protein 2-B (521 aa).

A compositionally biased stretch (low complexity) spans 1 to 18 (MDNDSQYSGYSYKSGQSR). A disordered region spans residues 1–73 (MDNDSQYSGY…RDDNWGETTT (73 aa)). Residues 1–108 (MDNDSQYSGY…AKLDCSRHLG (108 aa)) are Cytoplasmic-facing. Basic residues predominate over residues 19 to 33 (SSRKHRDRRERHRSK). The span at 57 to 67 (ESTRGEDRDDN) shows a compositional bias: basic and acidic residues. A helical membrane pass occupies residues 109 to 129 (VVIAGALALLSFLTPIAFMLL). The Extracellular portion of the chain corresponds to 130-147 (PQILWREDLEQCGTACEG). The chain crosses the membrane as a helical span at residues 148–168 (LFISVAFKLLILLLGSWALFF). The Cytoplasmic portion of the chain corresponds to 169-178 (RRPKAFFPRV). The chain crosses the membrane as a helical span at residues 179–199 (FVFRALLMVLVFLLVVSYWLF). The Extracellular portion of the chain corresponds to 200-218 (YGVRILESRDKNYQGIVQY). A helical membrane pass occupies residues 219 to 239 (AVSLVDALLFVHYLAVVLLEL). Residues 240–521 (RQLQPQFTIK…VMRLQSETSV (282 aa)) lie on the Cytoplasmic side of the membrane. The PDZ-binding motif lies at 518 to 521 (ETSV).

This sequence belongs to the Vang family. As to quaternary structure, interacts with dvl/dsh. Interacts with prickle3. As to expression, during gastrulation, broadly expressed in the dorsal region in both mesodermal and neural tissues. From the neurula stages, expressed throughout the neural tube. In tailbud stages, expression declines in the anterior notochord but remains strong in the posterior notochord and in the neural tube. Also weakly expressed in the prenephritic region of late tailbud embryos.

It is found in the cell membrane. Functionally, has a role in non-canonical Wnt/planar cell polarity (PCP) signaling; can recruit dvl/dsh and prickle from the cytoplasm to the plasma membrane. Acts in a PCP complex to regulate the polarized assembly of fibronectrin on the surface of the mesoderm during gastrulation. Regulates convergent extension in both dorsal mesoderm and neural tissue without affecting cell fate. Regulates neural fold closure during neurulation. May be required for cell surface localization of fzd3 and fzd6 in the inner ear. This chain is Vang-like protein 2-B (vangl2-b), found in Xenopus laevis (African clawed frog).